The sequence spans 101 residues: Putative pterin-4-alpha-carbinolamine dehydratase (101 aa).

This sequence belongs to the pterin-4-alpha-carbinolamine dehydratase family.

It catalyses the reaction (4aS,6R)-4a-hydroxy-L-erythro-5,6,7,8-tetrahydrobiopterin = (6R)-L-erythro-6,7-dihydrobiopterin + H2O. The chain is Putative pterin-4-alpha-carbinolamine dehydratase from Ralstonia pickettii (strain 12J).